The chain runs to 129 residues: Chorion class A protein L11 (129 aa).

The signal sequence occupies residues 1 to 21 (MSTFAFLLLCVQACLIQNVYG). The interval 22–64 (QCLGRGLGGCGCGGGLGGYGLGYGLGGYGGGYGYGGYGGGYYG) is left arm. The interval 65-112 (GYGGEGVGNVGVAGVLPVGGVTAVGGRVPIIGGVEFGGPACAGGCVSI) is central domain. The interval 113–129 (CGHCAPTCGCGYGGLYY) is right arm.

The protein belongs to the chorion protein family.

This protein is one of many from the eggshell of the silk moth. This Bombyx mori (Silk moth) protein is Chorion class A protein L11.